The primary structure comprises 46 residues: Large ribosomal subunit protein bL36B (46 aa).

The protein belongs to the bacterial ribosomal protein bL36 family.

This is Large ribosomal subunit protein bL36B from Enterobacter sp. (strain 638).